A 301-amino-acid chain; its full sequence is Probable 5-dehydro-4-deoxyglucarate dehydratase (301 aa).

Belongs to the DapA family.

The enzyme catalyses 5-dehydro-4-deoxy-D-glucarate + H(+) = 2,5-dioxopentanoate + CO2 + H2O. It functions in the pathway carbohydrate acid metabolism; D-glucarate degradation; 2,5-dioxopentanoate from D-glucarate: step 2/2. This is Probable 5-dehydro-4-deoxyglucarate dehydratase from Cereibacter sphaeroides (strain ATCC 17029 / ATH 2.4.9) (Rhodobacter sphaeroides).